Reading from the N-terminus, the 103-residue chain is Large ribosomal subunit protein uL24 (103 aa).

This sequence belongs to the universal ribosomal protein uL24 family. In terms of assembly, part of the 50S ribosomal subunit.

Functionally, one of two assembly initiator proteins, it binds directly to the 5'-end of the 23S rRNA, where it nucleates assembly of the 50S subunit. One of the proteins that surrounds the polypeptide exit tunnel on the outside of the subunit. This chain is Large ribosomal subunit protein uL24, found in Lacticaseibacillus casei (strain BL23) (Lactobacillus casei).